Consider the following 143-residue polypeptide: Nucleoside diphosphate kinase (143 aa).

6 residues coordinate ATP: K11, F59, R87, T93, R104, and N114. The active-site Pros-phosphohistidine intermediate is the H117.

The protein belongs to the NDK family. In terms of assembly, homotetramer. Mg(2+) serves as cofactor.

Its subcellular location is the cytoplasm. It catalyses the reaction a 2'-deoxyribonucleoside 5'-diphosphate + ATP = a 2'-deoxyribonucleoside 5'-triphosphate + ADP. It carries out the reaction a ribonucleoside 5'-diphosphate + ATP = a ribonucleoside 5'-triphosphate + ADP. In terms of biological role, major role in the synthesis of nucleoside triphosphates other than ATP. The ATP gamma phosphate is transferred to the NDP beta phosphate via a ping-pong mechanism, using a phosphorylated active-site intermediate. The protein is Nucleoside diphosphate kinase of Stutzerimonas stutzeri (strain A1501) (Pseudomonas stutzeri).